The sequence spans 863 residues: Bifunctional uridylyltransferase/uridylyl-removing enzyme (863 aa).

The segment at 1–328 (MLFPLSLSSP…SSNQATVIEQ (328 aa)) is uridylyltransferase. The segment at 329 to 687 (LDDDFQLINQ…ISNRFSLGGT (359 aa)) is uridylyl-removing. An HD domain is found at 446–568 (VDEHTLRVML…VQNQVRLDYL (123 aa)). 2 ACT domains span residues 688-772 (EVFI…PNRQ) and 794-863 (EMEL…RNIG).

The protein belongs to the GlnD family. Requires Mg(2+) as cofactor.

The enzyme catalyses [protein-PII]-L-tyrosine + UTP = [protein-PII]-uridylyl-L-tyrosine + diphosphate. The catalysed reaction is [protein-PII]-uridylyl-L-tyrosine + H2O = [protein-PII]-L-tyrosine + UMP + H(+). Its activity is regulated as follows. Uridylyltransferase (UTase) activity is inhibited by glutamine, while glutamine activates uridylyl-removing (UR) activity. In terms of biological role, modifies, by uridylylation and deuridylylation, the PII regulatory proteins (GlnB and homologs), in response to the nitrogen status of the cell that GlnD senses through the glutamine level. Under low glutamine levels, catalyzes the conversion of the PII proteins and UTP to PII-UMP and PPi, while under higher glutamine levels, GlnD hydrolyzes PII-UMP to PII and UMP (deuridylylation). Thus, controls uridylylation state and activity of the PII proteins, and plays an important role in the regulation of nitrogen assimilation and metabolism. The chain is Bifunctional uridylyltransferase/uridylyl-removing enzyme from Haemophilus influenzae (strain PittEE).